The sequence spans 349 residues: tRNA N6-adenosine threonylcarbamoyltransferase (349 aa).

Residues histidine 117, histidine 121, and tyrosine 138 each contribute to the Fe cation site. Substrate contacts are provided by residues 138-142, aspartate 170, aspartate 191, and asparagine 271; that span reads YVAGG. Aspartate 299 lines the Fe cation pocket.

Belongs to the KAE1 / TsaD family. The cofactor is Fe(2+).

It is found in the cytoplasm. The catalysed reaction is L-threonylcarbamoyladenylate + adenosine(37) in tRNA = N(6)-L-threonylcarbamoyladenosine(37) in tRNA + AMP + H(+). In terms of biological role, required for the formation of a threonylcarbamoyl group on adenosine at position 37 (t(6)A37) in tRNAs that read codons beginning with adenine. Is probably involved in the transfer of the threonylcarbamoyl moiety of threonylcarbamoyl-AMP (TC-AMP) to the N6 group of A37. The sequence is that of tRNA N6-adenosine threonylcarbamoyltransferase from Aeropyrum pernix (strain ATCC 700893 / DSM 11879 / JCM 9820 / NBRC 100138 / K1).